An 84-amino-acid polypeptide reads, in one-letter code: MTDHECEIRSVDGSWEAVGVEEALGLPSSLLKRCPECHGRVRVHRASVNGMRAHFEHMEAHRGCSLSRGVQFSGVSSPHPAALD.

This is an uncharacterized protein from Azorhizobium caulinodans (strain ATCC 43989 / DSM 5975 / JCM 20966 / LMG 6465 / NBRC 14845 / NCIMB 13405 / ORS 571).